The chain runs to 355 residues: Methylthioribose-1-phosphate isomerase (355 aa).

Substrate is bound by residues 50–52, Arg93, and Gln198; that span reads RGA. Catalysis depends on Asp239, which acts as the Proton donor. 249–250 serves as a coordination point for substrate; sequence NK.

Belongs to the eIF-2B alpha/beta/delta subunits family. MtnA subfamily. As to quaternary structure, homodimer.

The enzyme catalyses 5-(methylsulfanyl)-alpha-D-ribose 1-phosphate = 5-(methylsulfanyl)-D-ribulose 1-phosphate. It functions in the pathway amino-acid biosynthesis; L-methionine biosynthesis via salvage pathway; L-methionine from S-methyl-5-thio-alpha-D-ribose 1-phosphate: step 1/6. Catalyzes the interconversion of methylthioribose-1-phosphate (MTR-1-P) into methylthioribulose-1-phosphate (MTRu-1-P). The polypeptide is Methylthioribose-1-phosphate isomerase (Geobacillus thermodenitrificans (strain NG80-2)).